We begin with the raw amino-acid sequence, 331 residues long: CRISPR-associated endonuclease Cas1 (331 aa).

Mn(2+)-binding residues include glutamate 155, histidine 221, and glutamate 236.

The protein belongs to the CRISPR-associated endonuclease Cas1 family. As to quaternary structure, homodimer, forms a heterotetramer with a Cas2 homodimer. It depends on Mg(2+) as a cofactor. The cofactor is Mn(2+).

CRISPR (clustered regularly interspaced short palindromic repeat), is an adaptive immune system that provides protection against mobile genetic elements (viruses, transposable elements and conjugative plasmids). CRISPR clusters contain spacers, sequences complementary to antecedent mobile elements, and target invading nucleic acids. CRISPR clusters are transcribed and processed into CRISPR RNA (crRNA). Acts as a dsDNA endonuclease. Involved in the integration of spacer DNA into the CRISPR cassette. This Methanopyrus kandleri (strain AV19 / DSM 6324 / JCM 9639 / NBRC 100938) protein is CRISPR-associated endonuclease Cas1.